The sequence spans 175 residues: Adenine phosphoribosyltransferase (175 aa).

Belongs to the purine/pyrimidine phosphoribosyltransferase family. In terms of assembly, homodimer.

It is found in the cytoplasm. It carries out the reaction AMP + diphosphate = 5-phospho-alpha-D-ribose 1-diphosphate + adenine. It functions in the pathway purine metabolism; AMP biosynthesis via salvage pathway; AMP from adenine: step 1/1. Catalyzes a salvage reaction resulting in the formation of AMP, that is energically less costly than de novo synthesis. The chain is Adenine phosphoribosyltransferase from Lactobacillus delbrueckii subsp. bulgaricus (strain ATCC 11842 / DSM 20081 / BCRC 10696 / JCM 1002 / NBRC 13953 / NCIMB 11778 / NCTC 12712 / WDCM 00102 / Lb 14).